A 477-amino-acid polypeptide reads, in one-letter code: Ectonucleotide pyrophosphatase/phosphodiesterase family member 5 (477 aa).

The first 24 residues, 1–24 (MTSKFLLVSFILAALSLSTTFSLQ), serve as a signal peptide directing secretion. Residues D36 and T72 each contribute to the Zn(2+) site. The Nucleophile role is filled by T72. Residues N101 and N158 are each glycosylated (N-linked (GlcNAc...) asparagine). D191, H195, D238, and H239 together coordinate Zn(2+). Residues N292 and N329 are each glycosylated (N-linked (GlcNAc...) asparagine). H339 is a binding site for Zn(2+). N-linked (GlcNAc...) asparagine glycans are attached at residues N362, N369, N382, and N389. A helical membrane pass occupies residues 432 to 452 (PYFIGVSLGSIIVIVFFVIFI).

The protein belongs to the nucleotide pyrophosphatase/phosphodiesterase family. It depends on Zn(2+) as a cofactor. Post-translationally, N-glycosylated.

It is found in the secreted. It localises to the membrane. Functionally, can hydrolyze NAD but cannot hydrolyze nucleotide di- and triphosphates. Lacks lysopholipase D activity. May play a role in neuronal cell communication. The chain is Ectonucleotide pyrophosphatase/phosphodiesterase family member 5 from Homo sapiens (Human).